The sequence spans 288 residues: Acetyl-coenzyme A carboxylase carboxyl transferase subunit beta (288 aa).

Positions 34 to 288 (LFAKCPGCKQ…TLLSFHGGVQ (255 aa)) constitute a CoA carboxyltransferase N-terminal domain. Residues C38, C41, C56, and C59 each coordinate Zn(2+). The segment at 38–59 (CPGCKQAIYQKDLGQAKICPNC) adopts a C4-type zinc-finger fold.

Belongs to the AccD/PCCB family. Acetyl-CoA carboxylase is a heterohexamer composed of biotin carboxyl carrier protein (AccB), biotin carboxylase (AccC) and two subunits each of ACCase subunit alpha (AccA) and ACCase subunit beta (AccD). Zn(2+) serves as cofactor.

It localises to the cytoplasm. It carries out the reaction N(6)-carboxybiotinyl-L-lysyl-[protein] + acetyl-CoA = N(6)-biotinyl-L-lysyl-[protein] + malonyl-CoA. It functions in the pathway lipid metabolism; malonyl-CoA biosynthesis; malonyl-CoA from acetyl-CoA: step 1/1. Component of the acetyl coenzyme A carboxylase (ACC) complex. Biotin carboxylase (BC) catalyzes the carboxylation of biotin on its carrier protein (BCCP) and then the CO(2) group is transferred by the transcarboxylase to acetyl-CoA to form malonyl-CoA. The polypeptide is Acetyl-coenzyme A carboxylase carboxyl transferase subunit beta (Streptococcus thermophilus (strain ATCC BAA-491 / LMD-9)).